The sequence spans 982 residues: MASFFSDFGLMWYLEELNKKEFMKFKEFLKQEILQLRLKQISWTEVKKASREDLANLLLKHYEEKKAWDMTFKIFQKMNRKDLMERAGREIAGHSKLYQAHLKKKLTHDYARKFNIKVQDFSKQKFTQDDYDRFENFLISKVTAKKPHMVFLQGAAGIGKSLMLTKLMLAWSEGMVFQNKFSYIFYFCCQDVKKMKRASLAELISKEWPKTSAPIEDILSQPEKLLFVIDNLEVMECDMSERESELCDTCTEKQPVRILLSSLLRRKMLPKSSFLISATPETFEKMEGRVECTNVKIVTGFNESNIKMYFRSLFQDKTKTQEIFSLVKENQQLFTVCQVPVLCWMVATCLKKEIEKGRDLVSVCRRTTSLYTTHIFNLFIPQSAQYPSKESQAQLQSLCSLAAEGMWTDTFVFGEEALRRNGIMDSDIPTLLDVRILEKSKKSEKSYIFLHPSIQEVCAAIFYLLKSHMDHPSQDVKSIEALIFTFLKKVKVQWIFFGSFIFGLLHESEQKKLEAFFGHQLSQEIKRQLYQCLETISGNEELQEQVDGMKLFYCLFEMDDEAFLAQAMNCMEQINFVAKDYSDVIVAAHCLQHCSTLKKLSLSTQNVLSEGQEHSYTEKLLMCWHHMCSVLISSKDIYILQVKNTNLNETASLVLYSHLMYPSCTLKALVVNNVTFLCDNRLFFELIQNQCLQHLDLNLTFLSHGDVKLLCDVLSQEECNIEKLMVAACNLSPDDCKVFASVLISSKMLKHLNLSSNNLDKGISSLSKALCHPDCVLKNLVLVNCSLSEQCWDYLSEVLRRNKTLNHLDISSNDLKDEGLKVLCGALSLPDSVLKSLSVRYCLITTSGCQDLAEVLRKNQNLRNLQVSNNKIEDAGVKLLCDAIKHPNCHLENIGLEACALTGACCEDLASAFTHCKTLWGINLQENALDHSGLIVLFEALKQQQCTLHVLGLRITDFDKETQELLMAEEEKNPHLSILSSV.

Positions Met1–Gly93 constitute a Pyrin domain. One can recognise an NACHT domain in the interval His148–His471. Gly154–Ser161 is a binding site for ATP. LRR repeat units lie at residues Cys594 to Thr617, Asn689 to Gln716, Ser746 to Pro773, Asn802 to Gly825, Leu827 to Ile844, Asn859 to Asp882, and Cys916 to Ala940.

The protein belongs to the NLRP family.

Functionally, may be involved in inflammation and recognition of cytosolic pathogen-associated molecular patterns (PAMPs) not intercepted by membrane-bound receptors. This is NACHT, LRR and PYD domains-containing protein 4C (Nlrp4c) from Mus musculus (Mouse).